The chain runs to 745 residues: Probable xyloglucan glycosyltransferase 3 (745 aa).

A run of 2 helical transmembrane segments spans residues 116-136 (GFLL…LKGW) and 196-216 (IDYI…LFMV). Aspartate 300 is an active-site residue. Substrate is bound by residues aspartate 359 and aspartate 361. Residue aspartate 453 is part of the active site. 4 helical membrane-spanning segments follow: residues 531–551 (LILP…TMFV), 556–576 (LPIW…ILPA), 695–715 (IFKK…RSLL), and 720–740 (LHFY…LDLI).

The protein belongs to the glycosyltransferase 2 family. Plant cellulose synthase-like C subfamily.

It is found in the golgi apparatus membrane. Probable beta-1,4-glucan synthase rather involved in the synthesis of the xyloglucan backbone than cellulose. Seems to work simultaneously with xyloglucan 6-xylosyltransferase. Xyloglucan is a noncellulosic polysaccharides of plant cell wall and consists of a glucan backbone substituted by xylose, galactose and fucose. The protein is Probable xyloglucan glycosyltransferase 3 (CSLC3) of Oryza sativa subsp. japonica (Rice).